The following is a 315-amino-acid chain: uncharacterized protein (315 aa).

Polar residues predominate over residues 1–23 (MSNTDALNTANTQITENVDTSSM). A disordered region spans residues 1–31 (MSNTDALNTANTQITENVDTSSMKVEKTHDS).

This is an uncharacterized protein from Acanthamoeba polyphaga mimivirus (APMV).